The chain runs to 197 residues: NADH-quinone oxidoreductase subunit B (197 aa).

The [4Fe-4S] cluster site is built by Cys63, Cys64, Cys129, and Cys159.

Belongs to the complex I 20 kDa subunit family. NDH-1 is composed of 14 different subunits. Subunits NuoB, C, D, E, F, and G constitute the peripheral sector of the complex. The cofactor is [4Fe-4S] cluster.

The protein localises to the cell inner membrane. It catalyses the reaction a quinone + NADH + 5 H(+)(in) = a quinol + NAD(+) + 4 H(+)(out). NDH-1 shuttles electrons from NADH, via FMN and iron-sulfur (Fe-S) centers, to quinones in the respiratory chain. The immediate electron acceptor for the enzyme in this species is believed to be a menaquinone. Couples the redox reaction to proton translocation (for every two electrons transferred, four hydrogen ions are translocated across the cytoplasmic membrane), and thus conserves the redox energy in a proton gradient. The protein is NADH-quinone oxidoreductase subunit B of Bacteroides thetaiotaomicron (strain ATCC 29148 / DSM 2079 / JCM 5827 / CCUG 10774 / NCTC 10582 / VPI-5482 / E50).